A 780-amino-acid chain; its full sequence is Oocyte zinc finger protein XlCOF8.4 (780 aa).

15 C2H2-type zinc fingers span residues 250-272 (FPCS…RRTH), 278-300 (FSCS…HRTH), 306-328 (FSCS…QKTH), 334-356 (FPCS…RRTH), 362-384 (YSCS…RRTH), 390-412 (YSCS…RRTH), 418-440 (YSCS…WKTH), 446-468 (FSCV…YRTH), 474-496 (FSCF…LKIH), 618-640 (LSCS…QKTH), 646-668 (FSCS…RRTH), 674-696 (YSCS…RRTH), 702-724 (YSCS…WRTH), 730-752 (FSCT…HRTH), and 758-780 (FSCS…FQLH).

Belongs to the krueppel C2H2-type zinc-finger protein family.

It is found in the nucleus. Functionally, may be involved in transcriptional regulation. In Xenopus laevis (African clawed frog), this protein is Oocyte zinc finger protein XlCOF8.4.